A 211-amino-acid chain; its full sequence is Uracil phosphoribosyltransferase (211 aa).

5-phospho-alpha-D-ribose 1-diphosphate is bound by residues Arg79, Arg104, and 131-139 (DPMLATGGS). Uracil is bound by residues Ile196 and 201 to 203 (GDA). Asp202 is a 5-phospho-alpha-D-ribose 1-diphosphate binding site.

It belongs to the UPRTase family. Mg(2+) serves as cofactor.

The enzyme catalyses UMP + diphosphate = 5-phospho-alpha-D-ribose 1-diphosphate + uracil. Its pathway is pyrimidine metabolism; UMP biosynthesis via salvage pathway; UMP from uracil: step 1/1. With respect to regulation, allosterically activated by GTP. Functionally, catalyzes the conversion of uracil and 5-phospho-alpha-D-ribose 1-diphosphate (PRPP) to UMP and diphosphate. The chain is Uracil phosphoribosyltransferase from Limosilactobacillus reuteri (strain DSM 20016) (Lactobacillus reuteri).